Here is a 328-residue protein sequence, read N- to C-terminus: COP9 signalosome complex subunit 6 (328 aa).

Positions 42-175 (VALHPLVILN…VSVFESVIDI (134 aa)) constitute an MPN domain.

The protein belongs to the peptidase M67A family. CSN6 subfamily. As to quaternary structure, component of the CSN complex, composed of COPS1/GPS1, COPS2, COPS3, COPS4, COPS5, COPS6, COPS7 (COPS7A or COPS7B), COPS8 and COPS9. In the complex, it probably interacts directly with COPS2, COPS4, COPS5, COPS7 (COPS7A or COPS7B) and COPS9. Interacts with the translation initiation factor EIF3S6. Interacts weakly with RBX1. Directly interacts with COP1 and 14-3-3 protein sigma/SFN. Interacts with ERCC6.

The protein localises to the cytoplasm. The protein resides in the nucleus. Functionally, component of the COP9 signalosome complex (CSN), a complex involved in various cellular and developmental processes. The CSN complex is an essential regulator of the ubiquitin (Ubl) conjugation pathway by mediating the deneddylation of the cullin subunits of SCF-type E3 ligase complexes, leading to decrease the Ubl ligase activity of SCF-type complexes such as SCF, CSA or DDB2. The complex is also involved in phosphorylation of p53/TP53, c-jun/JUN, IkappaBalpha/NFKBIA, ITPK1 and IRF8, possibly via its association with CK2 and PKD kinases. CSN-dependent phosphorylation of TP53 and JUN promotes and protects degradation by the Ubl system, respectively. Has some glucocorticoid receptor-responsive activity. Stabilizes COP1 through reducing COP1 auto-ubiquitination and decelerating COP1 turnover rate, hence regulates the ubiquitination of COP1 targets, including SFN. The sequence is that of COP9 signalosome complex subunit 6 (COPS6) from Pongo abelii (Sumatran orangutan).